A 120-amino-acid chain; its full sequence is Protein BEX4 (120 aa).

Positions 1–54 (MESKEELAANNLNGENAQQENEGGEQAPTQNEEESRHLGGGEGQKPGGNIRRGR) are disordered. Low complexity predominate over residues 8–27 (AANNLNGENAQQENEGGEQA). The interval 31–90 (NEEESRHLGGGEGQKPGGNIRRGRVRRLVPNFRWAIPNRHIEHNEARDDVERFVGQMMEI) is interaction with SIRT2. The tract at residues 31–120 (NEEESRHLGG…DNHYDFCLIP (90 aa)) is interaction with alpha-tubulin. Cysteine 117 contacts Zn(2+).

It belongs to the BEX family. In terms of assembly, interacts with alpha-tubulin. Interacts with SIRT2. In terms of processing, ubiquitinated and degraded by the proteasome. Very high expression in heart, skeletal muscle, liver, and kidney. The levels of expression are uniform throughout the brain.

It is found in the cytoplasm. It localises to the cytoskeleton. The protein resides in the spindle pole. Its subcellular location is the nucleus. Its function is as follows. May play a role in microtubule deacetylation by negatively regulating the SIRT2 deacetylase activity toward alpha-tubulin and thereby participate in the control of cell cycle progression and genomic stability. In absence of reductive stress, acts as a pseudosubstrate for the CRL2(FEM1B) complex: associates with FEM1B via zinc, thereby preventing association between FEM1B and its substrates. The polypeptide is Protein BEX4 (Homo sapiens (Human)).